The following is a 344-amino-acid chain: Protein POLAR LOCALIZATION DURING ASYMMETRIC DIVISION AND REDISTRIBUTION (344 aa).

The residue at position 19 (T19) is a Phosphothreonine; by ASK7. Phosphoserine; by ASK7 is present on S79. 2 positions are modified to phosphothreonine; by ASK7: T84 and T86. 2 positions are modified to phosphoserine; by ASK7: S91 and S94. Residues T193, T217, and T233 each carry the phosphothreonine; by ASK7 modification. Residue S235 is modified to Phosphoserine; by ASK7. The stretch at 262 to 297 forms a coiled coil; that stretch reads LETRQQEELVKLETALNRVERRLQEKETEVSWWKDA. Phosphoserine; by ASK7 occurs at positions 308, 309, 320, 321, and 336.

In terms of assembly, component of a complex made of POLAR, BASL, ASK7/BIN2 and ASK3/SK12. Interacts with BASL, ASK7/BIN2 and ASK3/SK12. Phosphorylation by ASK7/BIN2 is increases turnover. In terms of tissue distribution, expressed in stomatal lineage cells with asymmetric division potential.

The protein localises to the cytoplasm. It localises to the cell cortex. Regulates asymmetric cell division (ACD), especially in stomatal-lineage cells. Acts as a stomatal lineage scaffold which regulates subcellular localization and transient polarization of kinases (e.g. ASK7/BIN2 and ASK3/SK12) involved in ACD in a BASL-dependent manner. Promotes the differentiation of both pavement cells and stomata. The sequence is that of Protein POLAR LOCALIZATION DURING ASYMMETRIC DIVISION AND REDISTRIBUTION from Arabidopsis thaliana (Mouse-ear cress).